The chain runs to 139 residues: Endoribonuclease YbeY (139 aa).

The Zn(2+) site is built by histidine 107, histidine 111, and aspartate 117.

Belongs to the endoribonuclease YbeY family. The cofactor is Zn(2+).

Its subcellular location is the cytoplasm. In terms of biological role, single strand-specific metallo-endoribonuclease involved in late-stage 70S ribosome quality control and in maturation of the 3' terminus of the 16S rRNA. This is Endoribonuclease YbeY from Azobacteroides pseudotrichonymphae genomovar. CFP2.